Reading from the N-terminus, the 1012-residue chain is Axonemal dynein light chain domain-containing protein 1 (1012 aa).

Low complexity predominate over residues 1–17 (MSLPKTPSTPLNSTSTS). Residues 1 to 34 (MSLPKTPSTPLNSTSTSESKKLKVSVAKEGTRGL) form a disordered region. 3 coiled-coil regions span residues 317–402 (QRIL…IWSS), 447–486 (EDLA…IVKD), and 572–597 (SERQ…RING). Acidic residues predominate over residues 841–854 (PEIDESFKEDEEES). 2 disordered regions span residues 841–879 (PEID…TEKE) and 963–1012 (LEEL…KKGH). 2 stretches are compositionally biased toward basic and acidic residues: residues 855 to 879 (KEDR…TEKE) and 963 to 987 (LEEL…REVK). Residues 988–997 (EEEEQQEEEE) show a composition bias toward acidic residues.

Highly expressed in testis. Highly expressed in the round and late spermatids.

It is found in the cytoplasm. Its function is as follows. May be essential for spermiogenesis and male fertility probably by regulating the manchette dynamics, spermatid head shaping and sperm flagellum assembly. The protein is Axonemal dynein light chain domain-containing protein 1 of Homo sapiens (Human).